A 293-amino-acid polypeptide reads, in one-letter code: Lysosomal amino acid transporter 1 homolog (293 aa).

Residues 1–37 lie on the Lumenal side of the membrane; sequence MVWRTLGASNFSTCPNGSVQWIWDVFGECAQDGWDEA. N-linked (GlcNAc...) asparagine glycosylation is found at Asn-10 and Asn-16. One can recognise a PQ-loop 1 domain in the interval 34-100; it reads WDEASVGLGL…LADQLPLQTY (67 aa). Residues 38-58 form a helical membrane-spanning segment; that stretch reads SVGLGLVSILCFAASTFPQYI. Residues 59 to 71 lie on the Cytoplasmic side of the membrane; that stretch reads KACKTGNMDQALS. The chain crosses the membrane as a helical span at residues 72–92; sequence LWFLLGWIGGDSCNLIGSFLA. Residues 93-96 lie on the Lumenal side of the membrane; the sequence is DQLP. The helical transmembrane segment at 97-117 threads the bilayer; that stretch reads LQTYTAVYYVLADLMMLTLYF. Residues 118–127 are Cytoplasmic-facing; sequence HYKFKKRPSP. The chain crosses the membrane as a helical span at residues 128–148; it reads LSAPINSVLLFILGTVCITPL. At 149 to 182 the chain is on the lumenal side; it reads LSSTDPVAVPREGFRGRTLLSVEPGNKPFTKKEV. The chain crosses the membrane as a helical span at residues 183–203; sequence IGFVIGSASSLLYLLSRLPQI. In terms of domain architecture, PQ-loop 2 spans 191 to 243; it reads SSLLYLLSRLPQIRTNFIRQSTQGISYSLFALVMLGNTLYGLSVLLKNPEVGQ. Topologically, residues 204-214 are cytoplasmic; the sequence is RTNFIRQSTQG. Residues 215–235 traverse the membrane as a helical segment; it reads ISYSLFALVMLGNTLYGLSVL. Topologically, residues 236–254 are lumenal; that stretch reads LKNPEVGQSEGSYLLHHLP. A helical membrane pass occupies residues 255–275; the sequence is WLVGSLGVLLLDTIISIQFLV. Over 276-293 the chain is Cytoplasmic; it reads YRSHETAAASEREPLLPS. A Di-leucine motif motif is present at residues 290 to 291; it reads LL.

Belongs to the laat-1 family. Ubiquitously expressed.

It is found in the lysosome membrane. Amino acid transporter that specifically mediates the pH-dependent export of the cationic amino acids arginine, histidine and lysine from lysosomes. In Mus musculus (Mouse), this protein is Lysosomal amino acid transporter 1 homolog.